We begin with the raw amino-acid sequence, 922 residues long: Isoleucine--tRNA ligase (922 aa).

The 'HIGH' region signature appears at P57 to H67. E553 provides a ligand contact to L-isoleucyl-5'-AMP. The 'KMSKS' region motif lies at K594–S598. K597 serves as a coordination point for ATP. The Zn(2+) site is built by C892, C895, C912, and C915.

Belongs to the class-I aminoacyl-tRNA synthetase family. IleS type 1 subfamily. Monomer. Requires Zn(2+) as cofactor.

The protein resides in the cytoplasm. It carries out the reaction tRNA(Ile) + L-isoleucine + ATP = L-isoleucyl-tRNA(Ile) + AMP + diphosphate. Functionally, catalyzes the attachment of isoleucine to tRNA(Ile). As IleRS can inadvertently accommodate and process structurally similar amino acids such as valine, to avoid such errors it has two additional distinct tRNA(Ile)-dependent editing activities. One activity is designated as 'pretransfer' editing and involves the hydrolysis of activated Val-AMP. The other activity is designated 'posttransfer' editing and involves deacylation of mischarged Val-tRNA(Ile). This chain is Isoleucine--tRNA ligase, found in Desulfitobacterium hafniense (strain DSM 10664 / DCB-2).